Consider the following 106-residue polypeptide: Replication restart protein PriB (106 aa).

One can recognise an SSB domain in the interval 4–103 (TNRLVLSGTV…LHAEQIEFID (100 aa)).

The protein belongs to the PriB family. In terms of assembly, homodimer. Interacts with PriA and DnaT. Component of the replication restart primosome. Primosome assembly occurs via a 'hand-off' mechanism. PriA binds to replication forks, subsequently PriB then DnaT bind; DnaT then displaces ssDNA to generate the helicase loading substrate.

In terms of biological role, involved in the restart of stalled replication forks, which reloads the replicative helicase on sites other than the origin of replication; the PriA-PriB pathway is the major replication restart pathway. During primosome assembly it facilitates complex formation between PriA and DnaT on DNA; stabilizes PriA on DNA. Stimulates the DNA unwinding activity of PriA helicase. This chain is Replication restart protein PriB, found in Yersinia enterocolitica serotype O:8 / biotype 1B (strain NCTC 13174 / 8081).